Here is a 43-residue protein sequence, read N- to C-terminus: MAVPKQKKSKSKSRFKKKNFLLKNKIIAKNQYNNYFIKHRCLV.

It belongs to the bacterial ribosomal protein bL32 family.

In Carsonella ruddii (strain PV), this protein is Large ribosomal subunit protein bL32 (rpmF).